A 449-amino-acid chain; its full sequence is Glutamyl-tRNA(Gln) amidotransferase subunit A (449 aa).

Active-site charge relay system residues include Lys-51 and Ser-126. The disordered stretch occupies residues 103-128 (STTESSAHGKTLNPVDSSRVPGGSSG). The segment covering 119–128 (SSRVPGGSSG) has biased composition (low complexity). Catalysis depends on Ser-150, which acts as the Acyl-ester intermediate.

Belongs to the amidase family. GatA subfamily. As to quaternary structure, heterotrimer of A, B and C subunits.

It carries out the reaction L-glutamyl-tRNA(Gln) + L-glutamine + ATP + H2O = L-glutaminyl-tRNA(Gln) + L-glutamate + ADP + phosphate + H(+). Allows the formation of correctly charged Gln-tRNA(Gln) through the transamidation of misacylated Glu-tRNA(Gln) in organisms which lack glutaminyl-tRNA synthetase. The reaction takes place in the presence of glutamine and ATP through an activated gamma-phospho-Glu-tRNA(Gln). The polypeptide is Glutamyl-tRNA(Gln) amidotransferase subunit A (Wolinella succinogenes (strain ATCC 29543 / DSM 1740 / CCUG 13145 / JCM 31913 / LMG 7466 / NCTC 11488 / FDC 602W) (Vibrio succinogenes)).